The primary structure comprises 906 residues: Protein translocase subunit SecA (906 aa).

Residues Gln-87, 105-109, and Asp-512 contribute to the ATP site; that span reads GEGKT. Positions 875-897 are disordered; it reads VTFVRDEQKVGRNDPCPCGSGKK. Zn(2+)-binding residues include Cys-890, Cys-892, Cys-901, and His-902.

It belongs to the SecA family. Monomer and homodimer. Part of the essential Sec protein translocation apparatus which comprises SecA, SecYEG and auxiliary proteins SecDF-YajC and YidC. It depends on Zn(2+) as a cofactor.

The protein localises to the cell inner membrane. It is found in the cytoplasm. The catalysed reaction is ATP + H2O + cellular proteinSide 1 = ADP + phosphate + cellular proteinSide 2.. In terms of biological role, part of the Sec protein translocase complex. Interacts with the SecYEG preprotein conducting channel. Has a central role in coupling the hydrolysis of ATP to the transfer of proteins into and across the cell membrane, serving both as a receptor for the preprotein-SecB complex and as an ATP-driven molecular motor driving the stepwise translocation of polypeptide chains across the membrane. This is Protein translocase subunit SecA from Aeromonas hydrophila subsp. hydrophila (strain ATCC 7966 / DSM 30187 / BCRC 13018 / CCUG 14551 / JCM 1027 / KCTC 2358 / NCIMB 9240 / NCTC 8049).